The sequence spans 456 residues: Ribosomal RNA small subunit methyltransferase F (456 aa).

S-adenosyl-L-methionine is bound by residues 109 to 115 (AAAPGGK), Glu133, Arg138, and Asp177. The active-site Nucleophile is Cys230.

This sequence belongs to the class I-like SAM-binding methyltransferase superfamily. RsmB/NOP family.

The protein localises to the cytoplasm. The catalysed reaction is cytidine(1400) in 16S rRNA + S-adenosyl-L-methionine = 5-methylcytidine(1400) in 16S rRNA + S-adenosyl-L-homocysteine + H(+). The enzyme catalyses cytidine(1404) in 16S rRNA + S-adenosyl-L-methionine = 5-methylcytidine(1404) in 16S rRNA + S-adenosyl-L-homocysteine + H(+). It carries out the reaction cytidine(1407) in 16S rRNA + S-adenosyl-L-methionine = 5-methylcytidine(1407) in 16S rRNA + S-adenosyl-L-homocysteine + H(+). In terms of biological role, specifically methylates the cytosines at positions 1400 (m5C1400), 1404 (m5C1404) and 1407 (m5C1407) of 16S rRNA. C1400, C1404 and C1407 are methylated in a 30S subunit substrate, but only C1400 and C1404 are methylated when naked 16S rRNA is the substrate. Methylation by RsmF may facilitate growth at temperatures outside the optimal growth temperature. This chain is Ribosomal RNA small subunit methyltransferase F, found in Thermus thermophilus (strain ATCC 27634 / DSM 579 / HB8).